The primary structure comprises 145 residues: D-aminoacyl-tRNA deacylase (145 aa).

The Gly-cisPro motif, important for rejection of L-amino acids signature appears at 137–138; that stretch reads GP.

It belongs to the DTD family. Homodimer.

The protein resides in the cytoplasm. It carries out the reaction glycyl-tRNA(Ala) + H2O = tRNA(Ala) + glycine + H(+). The catalysed reaction is a D-aminoacyl-tRNA + H2O = a tRNA + a D-alpha-amino acid + H(+). Functionally, an aminoacyl-tRNA editing enzyme that deacylates mischarged D-aminoacyl-tRNAs. Also deacylates mischarged glycyl-tRNA(Ala), protecting cells against glycine mischarging by AlaRS. Acts via tRNA-based rather than protein-based catalysis; rejects L-amino acids rather than detecting D-amino acids in the active site. By recycling D-aminoacyl-tRNA to D-amino acids and free tRNA molecules, this enzyme counteracts the toxicity associated with the formation of D-aminoacyl-tRNA entities in vivo and helps enforce protein L-homochirality. The chain is D-aminoacyl-tRNA deacylase from Escherichia coli O139:H28 (strain E24377A / ETEC).